The following is a 356-amino-acid chain: DNA polymerase IV (356 aa).

One can recognise a UmuC domain in the interval 6-187 (IIHIDMDYFF…LDIGDFPGVG (182 aa)). Residues Asp-10 and Asp-105 each coordinate Mg(2+). Glu-106 is a catalytic residue.

Belongs to the DNA polymerase type-Y family. Monomer. Mg(2+) serves as cofactor.

Its subcellular location is the cytoplasm. It catalyses the reaction DNA(n) + a 2'-deoxyribonucleoside 5'-triphosphate = DNA(n+1) + diphosphate. Its function is as follows. Poorly processive, error-prone DNA polymerase involved in untargeted mutagenesis. Copies undamaged DNA at stalled replication forks, which arise in vivo from mismatched or misaligned primer ends. These misaligned primers can be extended by PolIV. Exhibits no 3'-5' exonuclease (proofreading) activity. May be involved in translesional synthesis, in conjunction with the beta clamp from PolIII. In Staphylococcus epidermidis (strain ATCC 35984 / DSM 28319 / BCRC 17069 / CCUG 31568 / BM 3577 / RP62A), this protein is DNA polymerase IV.